Reading from the N-terminus, the 75-residue chain is U6-lycotoxin-Ls1d (75 aa).

Positions 1–21 are cleaved as a signal peptide; the sequence is MKLLLFTALVLVVISLIEVEA. Residues 22 to 25 constitute a propeptide that is removed on maturation; it reads ENER.

This sequence belongs to the neurotoxin 19 (CSTX) family. 06 (U6-Lctx) subfamily. Post-translationally, contains 4 disulfide bonds. Expressed by the venom gland.

The protein resides in the secreted. The polypeptide is U6-lycotoxin-Ls1d (Lycosa singoriensis (Wolf spider)).